Reading from the N-terminus, the 446-residue chain is Na(+)-translocating NADH-quinone reductase subunit A (446 aa).

It belongs to the NqrA family. In terms of assembly, composed of six subunits; NqrA, NqrB, NqrC, NqrD, NqrE and NqrF.

The enzyme catalyses a ubiquinone + n Na(+)(in) + NADH + H(+) = a ubiquinol + n Na(+)(out) + NAD(+). NQR complex catalyzes the reduction of ubiquinone-1 to ubiquinol by two successive reactions, coupled with the transport of Na(+) ions from the cytoplasm to the periplasm. NqrA to NqrE are probably involved in the second step, the conversion of ubisemiquinone to ubiquinol. This Histophilus somni (strain 2336) (Haemophilus somnus) protein is Na(+)-translocating NADH-quinone reductase subunit A.